The following is a 104-amino-acid chain: DNA-binding transcriptional repressor TubR (104 aa).

DNA-binding regions (HTH) lie at residues 43-50 (KTAVAEMI) and 54-65 (KPTVFATVNSFY).

Homodimer. Binds to tubC DNA, the TubR-DNA complex binds to TubZ.

Functionally, a DNA-binding protein that is part of the type III plasmid partition system used to ensure correct segregation of the pBtoxis plasmid. Cooperatively binds to the centromere-like site (tubC), which may seed filament formation by the TubZ polymerizing GTPase, stabilizing TubZ filaments. TubR-tubC complexes track the depolymerizing minus end of the filament, probably pulling plasmid within the cell. Required for plasmid replication. Negatively regulates levels of TubZ; its effect on RNA expression has not been shown. Specifically binds iterons, 12-bp imperfect direct repeats that function as a plasmid origin of replication. Four TubR dimers bind to tubC, forming an extended bent DNA-protein filament with protein wrapping helically around the outside of the DNA. The polypeptide is DNA-binding transcriptional repressor TubR (Bacillus thuringiensis subsp. israelensis).